A 245-amino-acid polypeptide reads, in one-letter code: Alanyl-tRNA editing protein AlaX-M (245 aa).

4 residues coordinate Zn(2+): His107, His111, Cys210, and His214.

The protein belongs to the class-II aminoacyl-tRNA synthetase family. Editing domain AlaX-M subfamily. Zn(2+) serves as cofactor.

The protein resides in the cytoplasm. In terms of biological role, functions in trans to edit the amino acid moiety from mischarged charged tRNA(Ala). This chain is Alanyl-tRNA editing protein AlaX-M (alaXM), found in Methanosarcina acetivorans (strain ATCC 35395 / DSM 2834 / JCM 12185 / C2A).